Consider the following 515-residue polypeptide: Sphingolipid 10-desaturase (515 aa).

Residues 3–23 (AVWALLWALQLGTLVGCALVL) traverse the membrane as a helical segment. In terms of domain architecture, Cytochrome b5 heme-binding spans 46-113 (AKPISDQKAA…DISFVFRVMH (68 aa)). The heme site is built by histidine 90 and histidine 113. A helical transmembrane segment spans residues 198–218 (TWLLWNTAVLISIIALSVISM). The short motif at 245 to 249 (HDAEH) is the Histidine box-1 element. A helical transmembrane segment spans residues 258-278 (LNDILGWIYGTVFLGVNGAWW). Positions 281-286 (EHREHH) match the Histidine box-2 motif. 3 helical membrane-spanning segments follow: residues 322–342 (IIHFLTNFQHILFLPIIFIVG), 359–379 (PWTILGNVCHILLHYAILSQT), and 382–402 (PIPVYIIGSLWQAILSLQLLG). Residues 447 to 451 (HYSHH) carry the Histidine box-3 motif.

It belongs to the fatty acid desaturase type 1 family. It depends on Fe(2+) as a cofactor.

Its subcellular location is the membrane. It carries out the reaction a (4E,8E)-4-sphinga-4,8-dienine ceramide + 2 Fe(II)-[cytochrome b5] + O2 + 2 H(+) = an N-acyl-(4E,8E,10E)-sphingatrienine + 2 Fe(III)-[cytochrome b5] + 2 H2O. The protein operates within lipid metabolism; sphingolipid metabolism. Its function is as follows. Fatty acid desaturase that catalyzes the introduction of the third double bond at the Delta(10) position in d18:3Delta4,8,10 triunsaturated sphingolipid long fatty acid chains. The cytochrome b5 domain probably acts as the direct electron donor to the active site of the desaturase. The protein is Sphingolipid 10-desaturase of Thalassiosira pseudonana (Marine diatom).